The chain runs to 695 residues: DNA ligase (695 aa).

NAD(+)-binding positions include 44 to 48 (DAEYD), 93 to 94 (SL), and E124. The active-site N6-AMP-lysine intermediate is K126. Positions 147, 187, 304, and 328 each coordinate NAD(+). Zn(2+)-binding residues include C422, C425, C440, and C445. Residues 606–695 (TVQGPLAGKT…GIEVEAAARS (90 aa)) enclose the BRCT domain.

It belongs to the NAD-dependent DNA ligase family. LigA subfamily. The cofactor is Mg(2+). It depends on Mn(2+) as a cofactor.

It catalyses the reaction NAD(+) + (deoxyribonucleotide)n-3'-hydroxyl + 5'-phospho-(deoxyribonucleotide)m = (deoxyribonucleotide)n+m + AMP + beta-nicotinamide D-nucleotide.. In terms of biological role, DNA ligase that catalyzes the formation of phosphodiester linkages between 5'-phosphoryl and 3'-hydroxyl groups in double-stranded DNA using NAD as a coenzyme and as the energy source for the reaction. It is essential for DNA replication and repair of damaged DNA. The chain is DNA ligase from Thermomicrobium roseum (strain ATCC 27502 / DSM 5159 / P-2).